The following is a 280-amino-acid chain: Tryptophan synthase alpha chain (280 aa).

Active-site proton acceptor residues include E50 and D61.

This sequence belongs to the TrpA family. As to quaternary structure, tetramer of two alpha and two beta chains.

The enzyme catalyses (1S,2R)-1-C-(indol-3-yl)glycerol 3-phosphate + L-serine = D-glyceraldehyde 3-phosphate + L-tryptophan + H2O. It functions in the pathway amino-acid biosynthesis; L-tryptophan biosynthesis; L-tryptophan from chorismate: step 5/5. Functionally, the alpha subunit is responsible for the aldol cleavage of indoleglycerol phosphate to indole and glyceraldehyde 3-phosphate. The protein is Tryptophan synthase alpha chain of Methylorubrum extorquens (strain CM4 / NCIMB 13688) (Methylobacterium extorquens).